Consider the following 177-residue polypeptide: Large ribosomal subunit protein uL6 (177 aa).

This sequence belongs to the universal ribosomal protein uL6 family. In terms of assembly, part of the 50S ribosomal subunit.

Functionally, this protein binds to the 23S rRNA, and is important in its secondary structure. It is located near the subunit interface in the base of the L7/L12 stalk, and near the tRNA binding site of the peptidyltransferase center. The sequence is that of Large ribosomal subunit protein uL6 from Bradyrhizobium sp. (strain BTAi1 / ATCC BAA-1182).